A 320-amino-acid chain; its full sequence is Acetyl-coenzyme A carboxylase carboxyl transferase subunit alpha (320 aa).

Residues 41–295 enclose the CoA carboxyltransferase C-terminal domain; sequence SIEEKAAQAL…GDAIAGALND (255 aa).

This sequence belongs to the AccA family. As to quaternary structure, acetyl-CoA carboxylase is a heterohexamer composed of biotin carboxyl carrier protein (AccB), biotin carboxylase (AccC) and two subunits each of ACCase subunit alpha (AccA) and ACCase subunit beta (AccD).

It is found in the cytoplasm. It carries out the reaction N(6)-carboxybiotinyl-L-lysyl-[protein] + acetyl-CoA = N(6)-biotinyl-L-lysyl-[protein] + malonyl-CoA. It participates in lipid metabolism; malonyl-CoA biosynthesis; malonyl-CoA from acetyl-CoA: step 1/1. In terms of biological role, component of the acetyl coenzyme A carboxylase (ACC) complex. First, biotin carboxylase catalyzes the carboxylation of biotin on its carrier protein (BCCP) and then the CO(2) group is transferred by the carboxyltransferase to acetyl-CoA to form malonyl-CoA. This Nitrobacter winogradskyi (strain ATCC 25391 / DSM 10237 / CIP 104748 / NCIMB 11846 / Nb-255) protein is Acetyl-coenzyme A carboxylase carboxyl transferase subunit alpha.